The following is a 143-amino-acid chain: 1,4-dihydroxy-2-naphthoyl-CoA hydrolase (143 aa).

Aspartate 14 is an active-site residue.

It belongs to the 4-hydroxybenzoyl-CoA thioesterase family. DHNA-CoA hydrolase subfamily.

It catalyses the reaction 1,4-dihydroxy-2-naphthoyl-CoA + H2O = 1,4-dihydroxy-2-naphthoate + CoA + H(+). Its pathway is cofactor biosynthesis; phylloquinone biosynthesis. The protein operates within quinol/quinone metabolism; 1,4-dihydroxy-2-naphthoate biosynthesis; 1,4-dihydroxy-2-naphthoate from chorismate: step 7/7. In terms of biological role, catalyzes the hydrolysis of 1,4-dihydroxy-2-naphthoyl-CoA (DHNA-CoA) to 1,4-dihydroxy-2-naphthoate (DHNA), a reaction involved in phylloquinone (vitamin K1) biosynthesis. This Gloeothece citriformis (strain PCC 7424) (Cyanothece sp. (strain PCC 7424)) protein is 1,4-dihydroxy-2-naphthoyl-CoA hydrolase.